The primary structure comprises 530 residues: Cytochrome P450 monooxygenase ausG (530 aa).

Residues 31-51 (LLVAYRLPGLLLLFSITIILF) form a helical membrane-spanning segment. Cys-470 contacts heme.

It belongs to the cytochrome P450 family. Heme is required as a cofactor.

The protein localises to the membrane. It participates in secondary metabolite biosynthesis; terpenoid biosynthesis. In terms of biological role, cytochrome P450 monooxygenase; part of the gene cluster B that mediates the biosynthesis of the fungal meroterpenoid acetoxydehydroaustin. The first step of the pathway is the synthesis of 3,5-dimethylorsellinic acid by the polyketide synthase ausA. 3,5-dimethylorsellinic acid is then prenylated by the polyprenyl transferase ausN. Further epoxidation by the FAD-dependent monooxygenase ausM and cyclization by the probable terpene cyclase ausL lead to the formation of protoaustinoid A. Protoaustinoid A is then oxidized to spiro-lactone preaustinoid A3 by the combined action of the FAD-binding monooxygenases ausB and ausC, and the dioxygenase ausE. Acid-catalyzed keto-rearrangement and ring contraction of the tetraketide portion of preaustinoid A3 by ausJ lead to the formation of preaustinoid A4. The aldo-keto reductase ausK, with the help of ausH, is involved in the next step by transforming preaustinoid A4 into isoaustinone which is in turn hydroxylated by the P450 monooxygenase ausI to form austinolide. The cytochrome P450 monooxygenase ausG then modifies austinolide to austinol. Austinol is further acetylated to austin by the O-acetyltransferase ausP, which spontaneously changes to dehydroaustin. The cytochrome P450 monooxygenase then converts dehydroaustin is into 7-dehydrodehydroaustin. The hydroxylation catalyzed by ausR permits the second O-acetyltransferase ausQ to add an additional acetyl group to the molecule, leading to the formation of acetoxydehydroaustin. Due to genetic rearrangements of the clusters and the subsequent loss of some enzymes, the end product of the Penicillium brasilianum austinoid biosynthesis clusters is acetoxydehydroaustin. This Penicillium brasilianum protein is Cytochrome P450 monooxygenase ausG.